Consider the following 660-residue polypeptide: Bifunctional polymyxin resistance protein ArnA (660 aa).

The formyltransferase ArnAFT stretch occupies residues 1–304 (MKTVVFAYHD…TLGLVQGSRL (304 aa)). 86–88 (HLI) serves as a coordination point for (6R)-10-formyltetrahydrofolate. The Proton donor; for formyltransferase activity role is filled by His104. (6R)-10-formyltetrahydrofolate contacts are provided by residues Arg114 and 136 to 140 (VKRAD). The dehydrogenase ArnADH stretch occupies residues 314 to 660 (RRTRVLILGV…RTVDLTDKPS (347 aa)). Residues Asp347 and 368-369 (DI) each bind NAD(+). Residues Ala393, Tyr398, and 432-433 (TS) each bind UDP-alpha-D-glucuronate. Glu434 serves as the catalytic Proton acceptor; for decarboxylase activity. UDP-alpha-D-glucuronate contacts are provided by residues Arg460, Asn492, 526–535 (KLIDGGKQKR), and Tyr613. Arg619 serves as the catalytic Proton donor; for decarboxylase activity.

It in the N-terminal section; belongs to the Fmt family. UDP-L-Ara4N formyltransferase subfamily. In the C-terminal section; belongs to the NAD(P)-dependent epimerase/dehydratase family. UDP-glucuronic acid decarboxylase subfamily. Homohexamer, formed by a dimer of trimers.

It catalyses the reaction UDP-alpha-D-glucuronate + NAD(+) = UDP-beta-L-threo-pentopyranos-4-ulose + CO2 + NADH. The enzyme catalyses UDP-4-amino-4-deoxy-beta-L-arabinose + (6R)-10-formyltetrahydrofolate = UDP-4-deoxy-4-formamido-beta-L-arabinose + (6S)-5,6,7,8-tetrahydrofolate + H(+). It participates in nucleotide-sugar biosynthesis; UDP-4-deoxy-4-formamido-beta-L-arabinose biosynthesis; UDP-4-deoxy-4-formamido-beta-L-arabinose from UDP-alpha-D-glucuronate: step 1/3. It functions in the pathway nucleotide-sugar biosynthesis; UDP-4-deoxy-4-formamido-beta-L-arabinose biosynthesis; UDP-4-deoxy-4-formamido-beta-L-arabinose from UDP-alpha-D-glucuronate: step 3/3. Its pathway is bacterial outer membrane biogenesis; lipopolysaccharide biosynthesis. Its function is as follows. Bifunctional enzyme that catalyzes the oxidative decarboxylation of UDP-glucuronic acid (UDP-GlcUA) to UDP-4-keto-arabinose (UDP-Ara4O) and the addition of a formyl group to UDP-4-amino-4-deoxy-L-arabinose (UDP-L-Ara4N) to form UDP-L-4-formamido-arabinose (UDP-L-Ara4FN). The modified arabinose is attached to lipid A and is required for resistance to polymyxin and cationic antimicrobial peptides. The polypeptide is Bifunctional polymyxin resistance protein ArnA (Escherichia coli O9:H4 (strain HS)).